Reading from the N-terminus, the 333-residue chain is Lipoyl synthase (333 aa).

Positions Met-1–Gln-15 are enriched in polar residues. Residues Met-1–Thr-34 form a disordered region. The [4Fe-4S] cluster site is built by Cys-80, Cys-85, Cys-91, Cys-106, Cys-110, Cys-113, and Ser-320. One can recognise a Radical SAM core domain in the interval Cys-91–Thr-309.

This sequence belongs to the radical SAM superfamily. Lipoyl synthase family. It depends on [4Fe-4S] cluster as a cofactor.

The protein resides in the cytoplasm. It catalyses the reaction [[Fe-S] cluster scaffold protein carrying a second [4Fe-4S](2+) cluster] + N(6)-octanoyl-L-lysyl-[protein] + 2 oxidized [2Fe-2S]-[ferredoxin] + 2 S-adenosyl-L-methionine + 4 H(+) = [[Fe-S] cluster scaffold protein] + N(6)-[(R)-dihydrolipoyl]-L-lysyl-[protein] + 4 Fe(3+) + 2 hydrogen sulfide + 2 5'-deoxyadenosine + 2 L-methionine + 2 reduced [2Fe-2S]-[ferredoxin]. Its pathway is protein modification; protein lipoylation via endogenous pathway; protein N(6)-(lipoyl)lysine from octanoyl-[acyl-carrier-protein]: step 2/2. Functionally, catalyzes the radical-mediated insertion of two sulfur atoms into the C-6 and C-8 positions of the octanoyl moiety bound to the lipoyl domains of lipoate-dependent enzymes, thereby converting the octanoylated domains into lipoylated derivatives. The chain is Lipoyl synthase from Bordetella bronchiseptica (strain ATCC BAA-588 / NCTC 13252 / RB50) (Alcaligenes bronchisepticus).